Here is a 293-residue protein sequence, read N- to C-terminus: uncharacterized protein (293 aa).

Disordered regions lie at residues 20-148 (ELHS…NNNT) and 226-283 (RENQ…GNKN). Acidic residues-rich tracts occupy residues 37–47 (LEDDEEYDDDQ), 56–91 (EEFD…DDEM), and 99–112 (NIDD…EEEQ). Low complexity-rich tracts occupy residues 117–148 (TNNN…NNNT) and 232–283 (NSNS…GNKN).

This is an uncharacterized protein from Dictyostelium discoideum (Social amoeba).